The following is a 507-amino-acid chain: RNA-splicing ligase RtcB homolog (507 aa).

Residues aspartate 121, cysteine 124, histidine 229, histidine 261, and histidine 355 each coordinate Mn(2+). 228 to 232 (NHYAE) is a GMP binding site. GMP contacts are provided by residues 355–356 (HN), 404–407 (GGTM), serine 411, 430–433 (HGAG), and lysine 506. The active-site GMP-histidine intermediate is histidine 430.

The protein belongs to the RtcB family. As to quaternary structure, catalytic component of the tRNA-splicing ligase complex. Requires Mn(2+) as cofactor.

The enzyme catalyses a 3'-end 3'-phospho-ribonucleotide-RNA + a 5'-end dephospho-ribonucleoside-RNA + GTP = a ribonucleotidyl-ribonucleotide-RNA + GMP + diphosphate. It catalyses the reaction a 3'-end 2',3'-cyclophospho-ribonucleotide-RNA + a 5'-end dephospho-ribonucleoside-RNA + GTP + H2O = a ribonucleotidyl-ribonucleotide-RNA + GMP + diphosphate + H(+). Catalytic subunit of the tRNA-splicing ligase complex that acts by directly joining spliced tRNA halves to mature-sized tRNAs by incorporating the precursor-derived splice junction phosphate into the mature tRNA as a canonical 3',5'-phosphodiester. May act as an RNA ligase with broad substrate specificity, and may function toward other RNAs. The protein is RNA-splicing ligase RtcB homolog of Branchiostoma floridae (Florida lancelet).